We begin with the raw amino-acid sequence, 342 residues long: Dihydroorotase (342 aa).

The Zn(2+) site is built by histidine 13 and histidine 15. Residues 15–17 and asparagine 41 contribute to the substrate site; that span reads HLR. 3 residues coordinate Zn(2+): lysine 98, histidine 135, and histidine 173. At lysine 98 the chain carries N6-carboxylysine. Position 135 (histidine 135) interacts with substrate. Residue leucine 218 coordinates substrate. Aspartate 246 is a Zn(2+) binding site. Aspartate 246 is a catalytic residue. 2 residues coordinate substrate: histidine 250 and alanine 262.

This sequence belongs to the metallo-dependent hydrolases superfamily. DHOase family. Class II DHOase subfamily. Homodimer. The cofactor is Zn(2+).

The enzyme catalyses (S)-dihydroorotate + H2O = N-carbamoyl-L-aspartate + H(+). The protein operates within pyrimidine metabolism; UMP biosynthesis via de novo pathway; (S)-dihydroorotate from bicarbonate: step 3/3. Catalyzes the reversible cyclization of carbamoyl aspartate to dihydroorotate. The chain is Dihydroorotase from Aliivibrio salmonicida (strain LFI1238) (Vibrio salmonicida (strain LFI1238)).